A 475-amino-acid polypeptide reads, in one-letter code: UDP-N-acetylmuramate--L-alanine ligase (475 aa).

114-120 serves as a coordination point for ATP; sequence GTHGKTT.

Belongs to the MurCDEF family.

It is found in the cytoplasm. It catalyses the reaction UDP-N-acetyl-alpha-D-muramate + L-alanine + ATP = UDP-N-acetyl-alpha-D-muramoyl-L-alanine + ADP + phosphate + H(+). It functions in the pathway cell wall biogenesis; peptidoglycan biosynthesis. In terms of biological role, cell wall formation. In Bartonella quintana (strain Toulouse) (Rochalimaea quintana), this protein is UDP-N-acetylmuramate--L-alanine ligase.